The chain runs to 117 residues: Cuticular protein 47Eg (117 aa).

Residues 1-16 (MKFFIAFACLLAVALA) form the signal peptide. One can recognise a Chitin-binding type R&amp;R domain in the interval 31–97 (VDGFAYAVEL…SANPPLPTPP (67 aa)).

Component of the larval cuticle. The sequence is that of Cuticular protein 47Eg (Cpr47Eg) from Drosophila melanogaster (Fruit fly).